A 340-amino-acid polypeptide reads, in one-letter code: Sulfotransferase ppzF (340 aa).

It functions in the pathway secondary metabolite biosynthesis. Functionally, sulfotransferase; part of the gene cluster that mediates the biosynthesis of pyrrolopyrazines, secondary metabolites showing insecticidal activity. The role of ppzF within the pathway has still to be determined. The single multifunctional NRPS ppzA is sufficient to produce peramine via condensation of 1-pyrroline-5-carboxylate and arginine, N-methylation of the alpha-amino group of arginine and reduction of the thioester and the cyclization to form an iminium ion resulting in release from the peptide synthetase. Deprotonation of this intermediate and oxidation of the pyrroline ring would give rise to peramine. In Epichloe species that produce only peramine, the peramine synthetase gene is not localized in a gene cluster, in contrast to Metarhizium species that contain additional pyrrolopyrazine biosynthesis genes. The 2-oxoglutarate-Fe(II) type oxidoreductase ppzC hydroxylates peramine to yield the newly identified compound 8-hydroxyperamine whereas ppzD converts L-proline into trans-4-hydroxy-L-proline, a precursor of peramine biosynthesis. The protein is Sulfotransferase ppzF of Metarhizium rileyi (strain RCEF 4871) (Nomuraea rileyi).